Here is a 66-residue protein sequence, read N- to C-terminus: Large ribosomal subunit protein bL33c (66 aa).

It belongs to the bacterial ribosomal protein bL33 family.

Its subcellular location is the plastid. The protein resides in the chloroplast. In Arabis hirsuta (Hairy rock-cress), this protein is Large ribosomal subunit protein bL33c.